The sequence spans 240 residues: Poxin (240 aa).

The active-site Proton donor is His-46. Catalysis depends on Tyr-181, which acts as the Shared with catalytic histidine of dimeric partner. The active-site Proton acceptor; shared with catalytic histidine of dimeric partner is the Lys-185.

It belongs to the poxin family. Homodimer.

It catalyses the reaction 2',3'-cGAMP + H2O = Gp(2'-5')Ap(3') + H(+). Its function is as follows. Nuclease that cleaves host 2',3'-cGAMP. The sequence is that of Poxin (p26) from Bombyx mori (Silk moth).